The following is a 156-amino-acid chain: Small ribosomal subunit protein uS7 (156 aa).

Belongs to the universal ribosomal protein uS7 family. In terms of assembly, part of the 30S ribosomal subunit. Contacts proteins S9 and S11.

Functionally, one of the primary rRNA binding proteins, it binds directly to 16S rRNA where it nucleates assembly of the head domain of the 30S subunit. Is located at the subunit interface close to the decoding center, probably blocks exit of the E-site tRNA. The polypeptide is Small ribosomal subunit protein uS7 (Methylibium petroleiphilum (strain ATCC BAA-1232 / LMG 22953 / PM1)).